Here is a 657-residue protein sequence, read N- to C-terminus: Pyoverdine export ATP-binding/permease protein PvdT (657 aa).

The ABC transporter domain occupies Ile6–Ala245. Gly43–Ser50 is an ATP binding site. Helical transmembrane passes span Ala285 to Gly305, Ile539 to Val559, Leu590 to Ile610, and Leu620 to Met640.

Belongs to the ABC transporter superfamily. Macrolide exporter (TC 3.A.1.122) family. As to quaternary structure, part of the tripartite efflux system PvdRT-OpmQ, which is composed of an inner membrane component with both ATPase and permease domains, PvdT, a periplasmic membrane fusion protein, PvdR, and an outer membrane component, OpmQ.

The protein resides in the cell inner membrane. Its function is as follows. Part of the tripartite efflux system PvdRT-OpmQ required for the secretion into the extracellular milieu of the siderophore pyoverdine (PVD), which is involved in iron acquisition. This subunit binds PVD and drives its secretion by hydrolyzing ATP. The system is responsible for export of newly synthesized PVD after the final steps of biosynthesis have taken place in the periplasm. It is also responsible for recycling of PVD after internalization of ferri-PVD into the periplasm by the outer-membrane receptor FpvA and release of iron from PVD, thus making PVD available for new cycles of iron uptake. The polypeptide is Pyoverdine export ATP-binding/permease protein PvdT (Pseudomonas fluorescens (strain Pf0-1)).